Reading from the N-terminus, the 287-residue chain is Energy-coupling factor transporter ATP-binding protein EcfA (287 aa).

The region spanning 19-252 is the ABC transporter domain; the sequence is FEIQNVSFSY…EEFLASSALD (234 aa). ATP is bound at residue 52 to 59; that stretch reads GHNGSGKS.

The protein belongs to the ABC transporter superfamily. Energy-coupling factor EcfA family. As to quaternary structure, forms a stable energy-coupling factor (ECF) transporter complex composed of 2 membrane-embedded substrate-binding proteins (S component), 2 ATP-binding proteins (A component) and 2 transmembrane proteins (T component).

It is found in the cell membrane. In terms of biological role, ATP-binding (A) component of a common energy-coupling factor (ECF) ABC-transporter complex. Unlike classic ABC transporters this ECF transporter provides the energy necessary to transport a number of different substrates. The protein is Energy-coupling factor transporter ATP-binding protein EcfA of Malacoplasma penetrans (strain HF-2) (Mycoplasma penetrans).